Consider the following 299-residue polypeptide: Putative peptidyl-prolyl cis-trans isomerase HP_0175 (299 aa).

An N-terminal signal peptide occupies residues 1-21; the sequence is MKKNILNLALVGALSTSFLMA. Residues 154-253 form the PpiC domain; the sequence is KQEAHARHIL…FGYHIIYLIS (100 aa).

The enzyme catalyses [protein]-peptidylproline (omega=180) = [protein]-peptidylproline (omega=0). This chain is Putative peptidyl-prolyl cis-trans isomerase HP_0175, found in Helicobacter pylori (strain ATCC 700392 / 26695) (Campylobacter pylori).